The sequence spans 229 residues: 3-dehydroquinate dehydratase (229 aa).

Residues 33–35 (EWR) and Arg-65 each bind 3-dehydroquinate. The active-site Proton donor/acceptor is the His-121. The active-site Schiff-base intermediate with substrate is Lys-146. 3-dehydroquinate-binding residues include Arg-188, Ser-207, and Gln-211.

The protein belongs to the type-I 3-dehydroquinase family. As to quaternary structure, homodimer.

It carries out the reaction 3-dehydroquinate = 3-dehydroshikimate + H2O. It participates in metabolic intermediate biosynthesis; chorismate biosynthesis; chorismate from D-erythrose 4-phosphate and phosphoenolpyruvate: step 3/7. Its function is as follows. Involved in the third step of the chorismate pathway, which leads to the biosynthesis of aromatic amino acids. Catalyzes the cis-dehydration of 3-dehydroquinate (DHQ) and introduces the first double bond of the aromatic ring to yield 3-dehydroshikimate. This Lactococcus lactis subsp. cremoris (strain SK11) protein is 3-dehydroquinate dehydratase.